The primary structure comprises 223 residues: dITP/XTP pyrophosphatase (223 aa).

Position 9–14 (threonine 9–lysine 14) interacts with substrate. Aspartate 71 serves as the catalytic Proton acceptor. Aspartate 71 provides a ligand contact to Mg(2+). Residues serine 72, phenylalanine 152–aspartate 155, lysine 175, and histidine 180–arginine 181 contribute to the substrate site. Residues leucine 203–lysine 223 are disordered.

It belongs to the HAM1 NTPase family. As to quaternary structure, homodimer. Mg(2+) serves as cofactor.

The enzyme catalyses XTP + H2O = XMP + diphosphate + H(+). It catalyses the reaction dITP + H2O = dIMP + diphosphate + H(+). It carries out the reaction ITP + H2O = IMP + diphosphate + H(+). Pyrophosphatase that catalyzes the hydrolysis of nucleoside triphosphates to their monophosphate derivatives, with a high preference for the non-canonical purine nucleotides XTP (xanthosine triphosphate), dITP (deoxyinosine triphosphate) and ITP. Seems to function as a house-cleaning enzyme that removes non-canonical purine nucleotides from the nucleotide pool, thus preventing their incorporation into DNA/RNA and avoiding chromosomal lesions. This chain is dITP/XTP pyrophosphatase, found in Desulfotalea psychrophila (strain LSv54 / DSM 12343).